Reading from the N-terminus, the 65-residue chain is Metallothionein-B (65 aa).

Belongs to the metallothionein superfamily. Type 4 family.

In terms of biological role, metallothioneins have a high content of cysteine residues that bind various heavy metals. The chain is Metallothionein-B (MTB1) from Strongylocentrotus purpuratus (Purple sea urchin).